A 276-amino-acid chain; its full sequence is Undecaprenyl-diphosphatase (276 aa).

6 consecutive transmembrane segments (helical) span residues 43-63 (RAMAFNIIIQLAAILAVVWEF), 85-105 (GNLLLAFMPAVVLGVLFADLI), 109-129 (LFNPVTVAAALVVGGVIMLWA), 183-203 (AATEFSFFLAMPTMVGAAVYS), 214-234 (GDLPVFALGFVTSFIFAMIAV), and 249-269 (FAWYRIVFGLFILATWQFGWV).

Belongs to the UppP family.

The protein localises to the cell inner membrane. The catalysed reaction is di-trans,octa-cis-undecaprenyl diphosphate + H2O = di-trans,octa-cis-undecaprenyl phosphate + phosphate + H(+). Functionally, catalyzes the dephosphorylation of undecaprenyl diphosphate (UPP). Confers resistance to bacitracin. This Pseudomonas putida (strain ATCC 700007 / DSM 6899 / JCM 31910 / BCRC 17059 / LMG 24140 / F1) protein is Undecaprenyl-diphosphatase.